The primary structure comprises 1066 residues: Isoleucine--tRNA ligase (1066 aa).

Positions 47-57 (PYTTGYIHLGT) match the 'HIGH' region motif. Positions 594 to 598 (KMSKS) match the 'KMSKS' region motif. Lysine 597 is a binding site for ATP.

It belongs to the class-I aminoacyl-tRNA synthetase family. IleS type 2 subfamily. Monomer. It depends on Zn(2+) as a cofactor.

The protein localises to the cytoplasm. It catalyses the reaction tRNA(Ile) + L-isoleucine + ATP = L-isoleucyl-tRNA(Ile) + AMP + diphosphate. Catalyzes the attachment of isoleucine to tRNA(Ile). As IleRS can inadvertently accommodate and process structurally similar amino acids such as valine, to avoid such errors it has two additional distinct tRNA(Ile)-dependent editing activities. One activity is designated as 'pretransfer' editing and involves the hydrolysis of activated Val-AMP. The other activity is designated 'posttransfer' editing and involves deacylation of mischarged Val-tRNA(Ile). This Methanocorpusculum labreanum (strain ATCC 43576 / DSM 4855 / Z) protein is Isoleucine--tRNA ligase.